Here is a 232-residue protein sequence, read N- to C-terminus: dTTP/UTP pyrophosphatase (232 aa).

Asp-103 functions as the Proton acceptor in the catalytic mechanism.

It belongs to the Maf family. YhdE subfamily. The cofactor is a divalent metal cation.

It is found in the cytoplasm. It carries out the reaction dTTP + H2O = dTMP + diphosphate + H(+). The enzyme catalyses UTP + H2O = UMP + diphosphate + H(+). Functionally, nucleoside triphosphate pyrophosphatase that hydrolyzes dTTP and UTP. May have a dual role in cell division arrest and in preventing the incorporation of modified nucleotides into cellular nucleic acids. This Bartonella henselae (strain ATCC 49882 / DSM 28221 / CCUG 30454 / Houston 1) (Rochalimaea henselae) protein is dTTP/UTP pyrophosphatase.